The primary structure comprises 307 residues: Methionyl-tRNA formyltransferase (307 aa).

108-111 contributes to the (6S)-5,6,7,8-tetrahydrofolate binding site; the sequence is SLLP.

The protein belongs to the Fmt family.

It carries out the reaction L-methionyl-tRNA(fMet) + (6R)-10-formyltetrahydrofolate = N-formyl-L-methionyl-tRNA(fMet) + (6S)-5,6,7,8-tetrahydrofolate + H(+). In terms of biological role, attaches a formyl group to the free amino group of methionyl-tRNA(fMet). The formyl group appears to play a dual role in the initiator identity of N-formylmethionyl-tRNA by promoting its recognition by IF2 and preventing the misappropriation of this tRNA by the elongation apparatus. The protein is Methionyl-tRNA formyltransferase of Xanthomonas axonopodis pv. citri (strain 306).